Reading from the N-terminus, the 170-residue chain is SKP1-like protein 16 (170 aa).

Residues Ile-109–Glu-167 form an interaction with the F-box domain of F-box proteins region.

The protein belongs to the SKP1 family. As to quaternary structure, part of a SCF (SKP1-cullin-F-box) protein ligase complex. Interacts with CPR1/CPR30, At3g61590 and At4g11590. As to expression, mainly detected in the siliques.

It localises to the nucleus. It functions in the pathway protein modification; protein ubiquitination. Functionally, involved in ubiquitination and subsequent proteasomal degradation of target proteins. Together with CUL1, RBX1 and a F-box protein, it forms a SCF E3 ubiquitin ligase complex. The functional specificity of this complex depends on the type of F-box protein. In the SCF complex, it serves as an adapter that links the F-box protein to CUL1. The sequence is that of SKP1-like protein 16 (ASK16) from Arabidopsis thaliana (Mouse-ear cress).